A 211-amino-acid chain; its full sequence is Large ribosomal subunit protein bL25 (211 aa).

Disordered stretches follow at residues 1-23 (MAGEIPDLVAEPRAGTGKGAARQ) and 191-211 (LRSADNEADEEETEEATAEEV). Residues 196-211 (NEADEEETEEATAEEV) show a composition bias toward acidic residues.

The protein belongs to the bacterial ribosomal protein bL25 family. CTC subfamily. Part of the 50S ribosomal subunit; part of the 5S rRNA/L5/L18/L25 subcomplex. Contacts the 5S rRNA. Binds to the 5S rRNA independently of L5 and L18.

Its function is as follows. This is one of the proteins that binds to the 5S RNA in the ribosome where it forms part of the central protuberance. This is Large ribosomal subunit protein bL25 from Dinoroseobacter shibae (strain DSM 16493 / NCIMB 14021 / DFL 12).